Reading from the N-terminus, the 254-residue chain is MSELVYGIHTVESIVNQSPNRILIVYIVSNPRDLRLKSLIYRIRKMNINIQECTRRVLNIKSMKSAHQGIIAEVIPMPALNEDYLLHFLKTKNNIIPLLLVLDGITDPHNLGACIRSADAAGVHMIIVPRDRSANVNATVRKVASGSSDRVPFVRVTNLSRTLKLLKKYNIYIVGSVLRSNQILFNTRLIDPIALVMGSESSGIRRLTRENCDKLVHIPTLQSTVSLNVSVATGIFLFETVRQRKYQNGFINYS.

Residues Gly198, Ile218, and Leu227 each contribute to the S-adenosyl-L-methionine site.

The protein belongs to the class IV-like SAM-binding methyltransferase superfamily. RNA methyltransferase TrmH family. RlmB subfamily. In terms of assembly, homodimer.

The protein resides in the cytoplasm. The enzyme catalyses guanosine(2251) in 23S rRNA + S-adenosyl-L-methionine = 2'-O-methylguanosine(2251) in 23S rRNA + S-adenosyl-L-homocysteine + H(+). Functionally, specifically methylates the ribose of guanosine 2251 in 23S rRNA. This Blochmanniella floridana protein is 23S rRNA (guanosine-2'-O-)-methyltransferase RlmB.